Consider the following 186-residue polypeptide: Peptidyl-tRNA hydrolase (186 aa).

Residue Tyr-13 participates in tRNA binding. His-18 acts as the Proton acceptor in catalysis. Tyr-59, Asn-61, and Asn-107 together coordinate tRNA.

This sequence belongs to the PTH family. Monomer.

It localises to the cytoplasm. It carries out the reaction an N-acyl-L-alpha-aminoacyl-tRNA + H2O = an N-acyl-L-amino acid + a tRNA + H(+). Hydrolyzes ribosome-free peptidyl-tRNAs (with 1 or more amino acids incorporated), which drop off the ribosome during protein synthesis, or as a result of ribosome stalling. In terms of biological role, catalyzes the release of premature peptidyl moieties from peptidyl-tRNA molecules trapped in stalled 50S ribosomal subunits, and thus maintains levels of free tRNAs and 50S ribosomes. The sequence is that of Peptidyl-tRNA hydrolase from Thermotoga maritima (strain ATCC 43589 / DSM 3109 / JCM 10099 / NBRC 100826 / MSB8).